A 646-amino-acid polypeptide reads, in one-letter code: Hypoxia up-regulated protein 1 (646 aa).

Residues 1–22 form the signal peptide; sequence MRPLVCVLWMFLFALLSSHTES. The segment at 572-646 is disordered; that stretch reads LFGGGSSVSE…KEEEKAEPQE (75 aa). Acidic residues predominate over residues 590–610; sequence VQEEDEVPTEPTKEEEQESAD. Residues 611–646 are compositionally biased toward basic and acidic residues; sequence PADKQQDKENNKEKGTSATNEKEEGKKEEEKAEPQE.

This sequence belongs to the heat shock protein 70 family.

Its subcellular location is the endoplasmic reticulum lumen. In terms of biological role, has a pivotal role in cytoprotective cellular mechanisms triggered by oxygen deprivation. May play a role as a molecular chaperone and participate in protein folding. The sequence is that of Hypoxia up-regulated protein 1 (hyou1) from Xenopus laevis (African clawed frog).